Reading from the N-terminus, the 413-residue chain is Alpha-1-antitrypsin-like protein CM55-SI (413 aa).

The N-terminal stretch at 1–24 is a signal peptide; sequence MPSSISWGLLLLAALSCLGPGSLA. Position 25 is a pyrrolidone carboxylic acid (glutamine 25). N-linked (GlcNAc...) asparagine glycans are attached at residues asparagine 65, asparagine 102, asparagine 165, and asparagine 266. Residues 368–387 are RCL; sequence GGTVLGNIRSILRYEVIFDR.

This sequence belongs to the serpin family. As to expression, expressed in liver.

The chain is Alpha-1-antitrypsin-like protein CM55-SI from Tamias sibiricus (Siberian chipmunk).